The sequence spans 109 residues: UPF0122 protein ABC2295 (109 aa).

The protein belongs to the UPF0122 family.

In terms of biological role, might take part in the signal recognition particle (SRP) pathway. This is inferred from the conservation of its genetic proximity to ftsY/ffh. May be a regulatory protein. This Shouchella clausii (strain KSM-K16) (Alkalihalobacillus clausii) protein is UPF0122 protein ABC2295.